Consider the following 187-residue polypeptide: Guanylate kinase (187 aa).

The Guanylate kinase-like domain occupies 5 to 183 (GRLTVLTGPS…ALKQLETHMQ (179 aa)). Residue 12–19 (GPSGVGKG) coordinates ATP.

The protein belongs to the guanylate kinase family.

The protein resides in the cytoplasm. The enzyme catalyses GMP + ATP = GDP + ADP. It carries out the reaction dZMP + ATP = dZDP + ADP. Its pathway is purine metabolism. Its function is as follows. Essential for recycling GMP and indirectly, cGMP. In terms of biological role, (Microbial infection) Catalyzes the phosphorylation of dZMP to dZDP, when the bacterium is infected by a phage that produces the substrate for the synthesis of dZTP (2- amino-2'-deoxyadenosine 5'-triphosphate), which is then used by the phage as a DNA polymerase substrate. The sequence is that of Guanylate kinase from Synechococcus sp. (strain CC9902).